A 309-amino-acid chain; its full sequence is Assembly-complementing factor 4 (309 aa).

Disordered stretches follow at residues Met-1–Ile-80, Lys-164–Pro-240, and Val-286–Arg-309. Basic and acidic residues-rich tracts occupy residues Glu-13–Ser-24 and Lys-34–Ser-44. Phosphoserine is present on residues Ser-44, Ser-71, Ser-74, Ser-78, and Ser-165. Residues Ser-61–Ile-80 are compositionally biased toward polar residues. Low complexity-rich tracts occupy residues Asn-174–Arg-188, Pro-205–Thr-214, and Pro-222–Thr-239. Over residues Arg-287–Pro-298 the composition is skewed to acidic residues. A Phosphoserine modification is found at Ser-288.

In terms of biological role, may be involved in actin cytoskeleton organization and biogenesis. The sequence is that of Assembly-complementing factor 4 (ACF4) from Saccharomyces cerevisiae (strain ATCC 204508 / S288c) (Baker's yeast).